Reading from the N-terminus, the 160-residue chain is Putative 4-hydroxy-4-methyl-2-oxoglutarate aldolase (160 aa).

Substrate contacts are provided by residues 76–79 and R98; that span reads GGNL. D99 contacts a divalent metal cation.

It belongs to the class II aldolase/RraA-like family. Homotrimer. It depends on a divalent metal cation as a cofactor.

The enzyme catalyses 4-hydroxy-4-methyl-2-oxoglutarate = 2 pyruvate. It carries out the reaction oxaloacetate + H(+) = pyruvate + CO2. In terms of biological role, catalyzes the aldol cleavage of 4-hydroxy-4-methyl-2-oxoglutarate (HMG) into 2 molecules of pyruvate. Also contains a secondary oxaloacetate (OAA) decarboxylase activity due to the common pyruvate enolate transition state formed following C-C bond cleavage in the retro-aldol and decarboxylation reactions. The protein is Putative 4-hydroxy-4-methyl-2-oxoglutarate aldolase of Deinococcus radiodurans (strain ATCC 13939 / DSM 20539 / JCM 16871 / CCUG 27074 / LMG 4051 / NBRC 15346 / NCIMB 9279 / VKM B-1422 / R1).